The sequence spans 83 residues: Major outer membrane lipoprotein (83 aa).

The N-terminal stretch at 1-19 (MNNVLKFSALALAAVLATG) is a signal peptide. Residue Cys-20 is the site of N-palmitoyl cysteine attachment. Residue Cys-20 is the site of S-diacylglycerol cysteine attachment.

The protein resides in the cell outer membrane. This Pseudomonas aeruginosa (strain ATCC 15692 / DSM 22644 / CIP 104116 / JCM 14847 / LMG 12228 / 1C / PRS 101 / PAO1) protein is Major outer membrane lipoprotein (oprI).